Reading from the N-terminus, the 419-residue chain is L-rhamnose isomerase (419 aa).

Mn(2+) contacts are provided by His-262, Asp-294, and Asp-296.

The protein belongs to the rhamnose isomerase family. In terms of assembly, homotetramer. Mn(2+) serves as cofactor.

Its subcellular location is the cytoplasm. It catalyses the reaction L-rhamnopyranose = L-rhamnulose. The protein operates within carbohydrate degradation; L-rhamnose degradation; glycerone phosphate from L-rhamnose: step 1/3. Functionally, catalyzes the interconversion of L-rhamnose and L-rhamnulose. The protein is L-rhamnose isomerase of Salmonella newport (strain SL254).